Consider the following 987-residue polypeptide: UPF0182 protein Lxx09300 (987 aa).

7 consecutive transmembrane segments (helical) span residues 17-37 (VWTT…FAGL), 59-79 (AAIA…WVVI), 108-128 (RLAM…SAAS), 167-187 (VGFA…TCYL), 206-226 (VQIS…VWLD), 256-276 (AVLA…AFTG), and 283-303 (VGTA…PWAI). Disordered regions lie at residues 700-719 (RDDA…DPTL) and 886-947 (TAGD…ALQQ). A compositionally biased stretch (low complexity) spans 705-719 (TTPNDPTSSPTDPTL). Gly residues predominate over residues 897–932 (GGSGGGSSGDAGSSAGGGSSGGGGSSAGGSSSGSGS). Positions 933–947 (SGTQSNAALQRALQQ) are enriched in low complexity.

It belongs to the UPF0182 family.

Its subcellular location is the cell membrane. This is UPF0182 protein Lxx09300 from Leifsonia xyli subsp. xyli (strain CTCB07).